Here is a 353-residue protein sequence, read N- to C-terminus: UPF0283 membrane protein YcjF (353 aa).

3 helical membrane-spanning segments follow: residues 70–90, 100–120, and 213–233; these read MVMGGLALFGASVVGQGVQWT, VALGGCAAGALIIGAGVGSVV, and ESTLMIAVSPLALVDMAFIAW.

Belongs to the UPF0283 family.

The protein resides in the cell inner membrane. This is UPF0283 membrane protein YcjF from Escherichia coli O7:K1 (strain IAI39 / ExPEC).